A 282-amino-acid polypeptide reads, in one-letter code: Bifunctional protein FolD 1 (282 aa).

NADP(+) contacts are provided by residues 167–169 (GRS) and S192.

Belongs to the tetrahydrofolate dehydrogenase/cyclohydrolase family. Homodimer.

It catalyses the reaction (6R)-5,10-methylene-5,6,7,8-tetrahydrofolate + NADP(+) = (6R)-5,10-methenyltetrahydrofolate + NADPH. It carries out the reaction (6R)-5,10-methenyltetrahydrofolate + H2O = (6R)-10-formyltetrahydrofolate + H(+). It participates in one-carbon metabolism; tetrahydrofolate interconversion. Catalyzes the oxidation of 5,10-methylenetetrahydrofolate to 5,10-methenyltetrahydrofolate and then the hydrolysis of 5,10-methenyltetrahydrofolate to 10-formyltetrahydrofolate. This chain is Bifunctional protein FolD 1, found in Colwellia psychrerythraea (strain 34H / ATCC BAA-681) (Vibrio psychroerythus).